We begin with the raw amino-acid sequence, 340 residues long: MPSLVDPVANKTDEGNNRTDLKAPEPEHCPGTESEEAGKADACQGCPNQDICASAPKGPDPDLPLIKDRMKGVKHKILVLSGKGGVGKSTFSSLLGWGFASDLDREVGLMDIDICGPSLPKMMGSEGEQIHTSLSGWSPIYVSDNLGMMSVGFMLPNQDDAIIWRGAKKNGLIKQFLKDVDWGNLDYLVVDTPPGTSDEHLSVTQYLKESGVDGAVVITTPQEVALLDVRKELDFCRKSGIKIIGLVENMSGFVCPNCKGESFIFAPTTGGGKALAEEFNIPFLGSVPLDPRIGKSCDHGESFVEEYPDSPATTAILDVIRQIREAVGDPQEDEDDDMDE.

The disordered stretch occupies residues 1-41 (MPSLVDPVANKTDEGNNRTDLKAPEPEHCPGTESEEAGKAD). Residues 11-30 (KTDEGNNRTDLKAPEPEHCP) are compositionally biased toward basic and acidic residues. Residues Cys-29, Cys-43, Cys-46, and Cys-52 each contribute to the [4Fe-4S] cluster site. Residue 82-89 (GKGGVGKS) participates in ATP binding. Cys-255 and Cys-258 together coordinate [4Fe-4S] cluster.

It belongs to the Mrp/NBP35 ATP-binding proteins family. NUBP1/NBP35 subfamily. In terms of assembly, heterotetramer of 2 NBP35 and 2 CFD1 chains. [4Fe-4S] cluster is required as a cofactor.

The protein localises to the cytoplasm. Its subcellular location is the nucleus. In terms of biological role, component of the cytosolic iron-sulfur (Fe/S) protein assembly (CIA) machinery. Required for maturation of extramitochondrial Fe-S proteins. The NBP35-CFD1 heterotetramer forms a Fe-S scaffold complex, mediating the de novo assembly of an Fe-S cluster and its transfer to target apoproteins. Required for biogenesis and export of both ribosomal subunits, which may reflect a role in assembly of the Fe/S clusters in RLI1, a protein which performs rRNA processing and ribosome export. This chain is Cytosolic Fe-S cluster assembly factor NBP35, found in Yarrowia lipolytica (strain CLIB 122 / E 150) (Yeast).